A 489-amino-acid polypeptide reads, in one-letter code: Threonine/serine exporter (489 aa).

A run of 10 helical transmembrane segments spans residues 151–171, 174–194, 206–226, 233–253, 268–288, 314–334, 335–355, 356–376, 381–401, and 420–440; these read GFPVALLGWAMMGGAVAVLLG, WQVSLIAFITAFTIIATTSFL, VVGGFIATLPASIAYSLALQF, SQIIASGIVVLLAGLTLVQSL, FFETLLFTGGIVAGVGLGIQL, IIAGGVTAAAFAVGCYAEWSS, VIIAGLTALMGSAFYYLFVVY, LGPVSAAAIAATAVGFTGGLL, LIPPLIVAIAGITPMLPGLAI, and IAVALATASSLAAGVVLGEWI. A disordered region spans residues 464 to 489; that stretch reads FQEEAEQNQRRQRKRPKTNQRFGNKR. Residues 473-489 show a composition bias toward basic residues; that stretch reads RRQRKRPKTNQRFGNKR.

The protein belongs to the ThrE exporter (TC 2.A.79) family.

Its subcellular location is the cell membrane. The catalysed reaction is L-threonine(in) + H(+)(out) = L-threonine(out) + H(+)(in). Transport is inhibited by the proton ionophore carbonyl cyanide m-chlorophenylhydrazone (CCCP). In terms of biological role, catalyzes the export of L-threonine and L-serine from the cell to the extracellular environment. Export is dependent on the proton motive force. The protein is Threonine/serine exporter of Corynebacterium glutamicum (Brevibacterium saccharolyticum).